Reading from the N-terminus, the 509-residue chain is Putative Rieske 2Fe-2S iron-sulfur protein YhfW (509 aa).

Positions 423–509 (KPDVQFEDIS…IKPLKQIDLD (87 aa)) constitute a Rieske domain. Positions 463, 465, 481, and 484 each coordinate [2Fe-2S] cluster. Cys468 and Cys483 are joined by a disulfide.

Belongs to the Rieske iron-sulfur protein family. [2Fe-2S] cluster serves as cofactor.

The protein is Putative Rieske 2Fe-2S iron-sulfur protein YhfW (yhfW) of Bacillus subtilis (strain 168).